Consider the following 360-residue polypeptide: Meiosis-inducing protein 1 (360 aa).

The segment at 102 to 135 (SKETKTTKDCTMATGPERGKKSSESTRSSSLSSL) is disordered. Over residues 126 to 135 (STRSSSLSSL) the composition is skewed to low complexity.

In terms of assembly, interacts with UME6.

It is found in the nucleus. Functionally, transcription factor required for sporulation and for early sporulation-specific genes expression. Positive regulator of SME1/IME2 expression. Directly activates expression of SLZ1 during meiosis. The sequence is that of Meiosis-inducing protein 1 (IME1) from Saccharomyces cerevisiae (strain ATCC 204508 / S288c) (Baker's yeast).